The following is a 315-amino-acid chain: Prephenate dehydratase (315 aa).

In terms of domain architecture, Prephenate dehydratase spans 3–189 (RIAYLGPEGT…ARTRFLLIGV (187 aa)). An ACT domain is found at 203-280 (SVVLRIANVP…ADVRYLGSWP (78 aa)).

In terms of assembly, homodimer.

The catalysed reaction is prephenate + H(+) = 3-phenylpyruvate + CO2 + H2O. It functions in the pathway amino-acid biosynthesis; L-phenylalanine biosynthesis; phenylpyruvate from prephenate: step 1/1. This is Prephenate dehydratase (pheA) from Mycobacterium marinum (strain ATCC BAA-535 / M).